The sequence spans 421 residues: UDP-N-acetylglucosamine 1-carboxyvinyltransferase (421 aa).

22–23 (KN) lines the phosphoenolpyruvate pocket. R93 contributes to the UDP-N-acetyl-alpha-D-glucosamine binding site. C117 (proton donor) is an active-site residue. The residue at position 117 (C117) is a 2-(S-cysteinyl)pyruvic acid O-phosphothioketal. Residues 122–126 (RPVDL), D308, and L330 each bind UDP-N-acetyl-alpha-D-glucosamine.

It belongs to the EPSP synthase family. MurA subfamily.

The protein localises to the cytoplasm. The catalysed reaction is phosphoenolpyruvate + UDP-N-acetyl-alpha-D-glucosamine = UDP-N-acetyl-3-O-(1-carboxyvinyl)-alpha-D-glucosamine + phosphate. It participates in cell wall biogenesis; peptidoglycan biosynthesis. Cell wall formation. Adds enolpyruvyl to UDP-N-acetylglucosamine. The chain is UDP-N-acetylglucosamine 1-carboxyvinyltransferase from Wolinella succinogenes (strain ATCC 29543 / DSM 1740 / CCUG 13145 / JCM 31913 / LMG 7466 / NCTC 11488 / FDC 602W) (Vibrio succinogenes).